A 622-amino-acid chain; its full sequence is Pyranose 2-oxidase (622 aa).

Residues 1 to 28 (MSASSSDPFHSFAKTSFTSKAAKRATAH) form the signal peptide. Residues 29–37 (SLPPLPGPG) constitute a propeptide that is removed on maturation. Tele-8alpha-FAD histidine is present on H167. Substrate contacts are provided by Q449 and H451. Residue H546 is the Proton acceptor of the active site. The active site involves N591.

The protein belongs to the GMC oxidoreductase family. Homotetramer. Requires FAD as cofactor. In terms of processing, not glycosylated.

The protein resides in the periplasm. The enzyme catalyses D-glucose + O2 = 2-dehydro-D-glucose + H2O2. Its function is as follows. Catalyzes the oxidation of various aldopyranoses and disaccharides on carbon-2 to the corresponding 2-keto sugars concomitant with the reduction of O(2) to H(2)O(2). Plays an important role in lignin degradation of wood rot fungi by supplying the essential cosubstrate H(2)O(2) for the ligninolytic peroxidases, lignin peroxidase and manganese-dependent peroxidase. The preferred substrate is D-glucose which is converted to 2-dehydro-D-glucose, an intermediate of a secondary metabolic pathway leading to the antibiotic cortalcerone. Also acts on D-xylose, together with D-glucose the major sugars derived from wood, on L-sorbose, D-galactose and 1,5-anhydroglucitol, a diagnostic marker of diabetes mellitus. In Phlebiopsis gigantea (White-rot fungus), this protein is Pyranose 2-oxidase (p2ox).